The chain runs to 93 residues: Ribonuclease P protein component 1 (93 aa).

It belongs to the eukaryotic/archaeal RNase P protein component 1 family. Consists of a catalytic RNA component and at least 4-5 protein subunits.

The protein localises to the cytoplasm. It catalyses the reaction Endonucleolytic cleavage of RNA, removing 5'-extranucleotides from tRNA precursor.. Functionally, part of ribonuclease P, a protein complex that generates mature tRNA molecules by cleaving their 5'-ends. This is Ribonuclease P protein component 1 from Methanosphaera stadtmanae (strain ATCC 43021 / DSM 3091 / JCM 11832 / MCB-3).